A 271-amino-acid chain; its full sequence is Interleukin-1 alpha (271 aa).

The propeptide occupies 1 to 112 (MAKVPDMFED…DSEEEIIKPR (112 aa)). Residue Lys82 is modified to N6-acetyllysine. The segment at 82–86 (KKRRL) is nuclear localization signal (NLS). Ser87 bears the Phosphoserine mark. 4 N-linked (GlcNAc...) asparagine glycosylation sites follow: Asn102, Asn121, Asn137, and Asn141.

Belongs to the IL-1 family. Monomer. Interacts with TMED10; the interaction mediates the translocation from the cytoplasm into the ERGIC (endoplasmic reticulum-Golgi intermediate compartment) and thereby secretion. Interacts with IL1R1. Interacts with S100A13; this interaction is the first step in the export of IL1A, followed by direct translocation of this complex across the plasma membrane. Post-translationally, acetylated within its nuclear localization sequence, which impacts subcellular localization. In terms of processing, proteolytic processed by CAPN1 in a calcium-dependent manner. Cleavage from 31 kDa precursor to 18 kDa biologically active molecules. Phosphorylated. Phosphorylation greatly enhances susceptibility to digestion and promotes the conversion of pre-IL1A alpha to the biologically active IL1A.

The protein localises to the nucleus. It is found in the cytoplasm. The protein resides in the secreted. Functionally, cytokine constitutively present intracellularly in nearly all resting non-hematopoietic cells that plays an important role in inflammation and bridges the innate and adaptive immune systems. After binding to its receptor IL1R1 together with its accessory protein IL1RAP, forms the high affinity interleukin-1 receptor complex. Signaling involves the recruitment of adapter molecules such as MYD88, IRAK1 or IRAK4. In turn, mediates the activation of NF-kappa-B and the three MAPK pathways p38, p42/p44 and JNK pathways. Within the cell, acts as an alarmin and cell death results in its liberation in the extracellular space after disruption of the cell membrane to induce inflammation and alert the host to injury or damage. In addition to its role as a danger signal, which occurs when the cytokine is passively released by cell necrosis, directly senses DNA damage and acts as signal for genotoxic stress without loss of cell integrity. In Macaca fascicularis (Crab-eating macaque), this protein is Interleukin-1 alpha (IL1A).